The primary structure comprises 134 residues: Complexin-1 (134 aa).

Disordered regions lie at residues Met1–Glu60 and Lys74–Glu114. Positions Asp15–Glu60 are enriched in basic and acidic residues. Residues Asp29–Gln64 adopt a coiled-coil conformation. Positions Arg48 to Tyr70 are interaction with the SNARE complex.

The protein belongs to the complexin/synaphin family. Binds to the SNARE core complex containing SNAP25, VAMP2 and STX1A. In terms of tissue distribution, nervous system, and pancreatic islet cells. Present in many brain regions, including hippocampus and cerebellum. In the retina, present at conventional amacrine cell synapses (at protein level).

The protein localises to the cytoplasm. It localises to the cytosol. Its subcellular location is the perikaryon. It is found in the presynapse. Its function is as follows. Positively regulates a late step in exocytosis of various cytoplasmic vesicles, such as synaptic vesicles and other secretory vesicles. Organizes the SNAREs into a cross-linked zigzag topology that, when interposed between the vesicle and plasma membranes, is incompatible with fusion, thereby preventing SNAREs from releasing neurotransmitters until an action potential arrives at the synapse. Also involved in glucose-induced secretion of insulin by pancreatic beta-cells. Essential for motor behavior. This is Complexin-1 (Cplx1) from Mus musculus (Mouse).